Consider the following 339-residue polypeptide: Nicotinate-nucleotide--dimethylbenzimidazole phosphoribosyltransferase (339 aa).

The active-site Proton acceptor is the glutamate 306.

It belongs to the CobT family.

It carries out the reaction 5,6-dimethylbenzimidazole + nicotinate beta-D-ribonucleotide = alpha-ribazole 5'-phosphate + nicotinate + H(+). Its pathway is nucleoside biosynthesis; alpha-ribazole biosynthesis; alpha-ribazole from 5,6-dimethylbenzimidazole: step 1/2. In terms of biological role, catalyzes the synthesis of alpha-ribazole-5'-phosphate from nicotinate mononucleotide (NAMN) and 5,6-dimethylbenzimidazole (DMB). This is Nicotinate-nucleotide--dimethylbenzimidazole phosphoribosyltransferase from Brucella melitensis biotype 1 (strain ATCC 23456 / CCUG 17765 / NCTC 10094 / 16M).